The primary structure comprises 113 residues: Protein Wnt-10 (113 aa).

The O-palmitoleoyl serine; by PORCN moiety is linked to residue Ser1. A disulfide bridge connects residues Cys79 and Cys94.

This sequence belongs to the Wnt family. Post-translationally, palmitoleoylation is required for efficient binding to frizzled receptors. Depalmitoleoylation leads to Wnt signaling pathway inhibition.

It is found in the secreted. The protein resides in the extracellular space. Its subcellular location is the extracellular matrix. Functionally, ligand for members of the frizzled family of seven transmembrane receptors. Probable developmental protein. May be a signaling molecule which affects the development of discrete regions of tissues. Is likely to signal over only few cell diameters. This is Protein Wnt-10 (WNT-10) from Eptatretus stoutii (Pacific hagfish).